A 300-amino-acid chain; its full sequence is Jacalin-related lectin 32 (300 aa).

The residue at position 2 (A2) is an N-acetylalanine. 2 Jacalin-type lectin domains span residues 2–146 (AQKV…YFTT) and 154–297 (AKKL…HILP).

This sequence belongs to the jacalin lectin family.

Functionally, involved in gametophytic development. This Arabidopsis thaliana (Mouse-ear cress) protein is Jacalin-related lectin 32 (JAL32).